A 676-amino-acid chain; its full sequence is PAS domain-containing protein cky-1 (676 aa).

Residues 45 to 72 (SALNNNSINVPNNNTMGMSSAGSSNGSN) show a composition bias toward low complexity. The disordered stretch occupies residues 45–89 (SALNNNSINVPNNNTMGMSSAGSSNGSNLVNGQQRSTRGASKQRR). A compositionally biased stretch (polar residues) spans 73-84 (LVNGQQRSTRGA). A basic motif region spans residues 76 to 89 (GQQRSTRGASKQRR). The bHLH domain maps to 76–129 (GQQRSTRGASKQRRDQINVEIQKLRDLLPLSDLIKDRLFQLQVMSLGCIFIRKH). A helix-loop-helix motif region spans residues 90–129 (DQINVEIQKLRDLLPLSDLIKDRLFQLQVMSLGCIFIRKH). One can recognise a PAS domain in the interval 165 to 215 (MLMVTRSGKILHVSDNASEYLGHSVEEIMCQGDSIYDLVDGRDHGAVQAEL). Residues 436–462 (FSCQDSPPPSEEQQPSSPQTPPFTEQP) form a disordered region.

As to quaternary structure, heterodimer; efficient DNA binding requires dimerization with another bHLH protein. Forms a heterodimer with ARNT homolog aha-1; binds DNA as heterodimer.

Its subcellular location is the nucleus. Functionally, transcription factor. Efficient DNA binding requires dimerization with another bHLH protein, such as ARNT homolog aha-1. Regulates transcription of target genes, probably acting in complex with aha-1. In Caenorhabditis elegans, this protein is PAS domain-containing protein cky-1.